A 603-amino-acid polypeptide reads, in one-letter code: Variable flagella 3 (603 aa).

The stretch at 169-289 forms a coiled coil; that stretch reads GGEVSAELRR…TEDLEARDRR (121 aa). Residues 288–297 are compositionally biased toward basic and acidic residues; the sequence is RRMNSTDRIR. Disordered stretches follow at residues 288–526 and 539–564; these read RRMN…PARA and AGRG…SSKS. Low complexity predominate over residues 337-348; it reads SRSNSRGRGTSS. Residues 364–380 show a composition bias toward basic and acidic residues; the sequence is PRFDPTEYVRQRKERES. Over residues 397-406 the composition is skewed to polar residues; the sequence is AGTSRASSVV. Gly residues predominate over residues 486–510; sequence GASGGGAGGWSKFPGGGGGGVGGSG. Residues 511–520 show a composition bias toward polar residues; it reads QRISSNSPRS.

The protein belongs to the CCDC61 family.

It localises to the cytoplasm. Its subcellular location is the cytoskeleton. It is found in the flagellum basal body. Its function is as follows. Required for normal flagella and striated fiber formation. This chain is Variable flagella 3, found in Chlamydomonas reinhardtii (Chlamydomonas smithii).